We begin with the raw amino-acid sequence, 1255 residues long: Structural polyprotein (1255 aa).

A necessary for nucleocapsid assembly and virus assembly region spans residues 1–33 (MFPFQPMYPMQPMPYRNPFAAPRRPWFPRTDPF). The tract at residues 33–68 (FLAMQVQELTRSMANLTFKQRREAPPEGPPAKKPKR) is host transcription inhibition. Residues 41-48 (LTRSMANL) carry the Supraphysiological nuclear export signal motif. The tract at residues 44–119 (SMANLTFKQR…KKPGKRQRMV (76 aa)) is disordered. N47 is a glycosylation site (N-linked (GlcNAc...) asparagine; by host). Residues 64–68 (KKPKR) carry the Nuclear localization signal motif. A compositionally biased stretch (basic residues) spans 80 to 92 (GKKKKNQGKKKAK). Residues 91–127 (AKTGPPNPKAQNGNKKKTNKKPGKRQRMVMKLESDKT) form a binding to the viral RNA region. 2 positions are modified to phosphothreonine: T93 and T108. Positions 104–118 (NKKKTNKKPGKRQRM) are enriched in basic residues. A ribosome-binding region spans residues 112–126 (PGKRQRMVMKLESDK). S124 is modified (phosphoserine). In terms of domain architecture, Peptidase S3 spans 126–275 (KTFPIMLEGK…KYTPENCEQW (150 aa)). T127 carries the phosphothreonine modification. H152 functions as the Charge relay system in the catalytic mechanism. An interaction with spike glycoprotein E2 region spans residues 168 to 173 (KKASKY). Active-site charge relay system residues include D174 and S226. The interval 260 to 264 (EKGVT) is interaction with spike glycoprotein E2. The interval 276–287 (SLVTTMCLLANV) is functions as an uncleaved signal peptide for the precursor of protein E3/E2. Residues 276–701 (SLVTTMCLLA…HYYHRYPMST (426 aa)) lie on the Extracellular side of the membrane. 7 disulfide bridges follow: C282-C291, C353-C457, C356-C361, C424-C438, C485-C600, C534-C560, and C536-C554. N286 carries an N-linked (GlcNAc...) asparagine; by host glycan. N652 is a glycosylation site (N-linked (GlcNAc...) asparagine; by host). Residues 702 to 722 (ILGLSICAAIVTVSIAASTWL) traverse the membrane as a helical segment. Residues 723–757 (LCKSRVSCLTPYRLTPNARMPLCLAVLCCARTARA) lie on the Cytoplasmic side of the membrane. Residues 725 to 729 (KSRVS) are interaction with the capsid protein. 3 S-palmitoyl cysteine; by host lipidation sites follow: C730, C750, and C751. Residues 730–750 (CLTPYRLTPNARMPLCLAVLC) form a transient transmembrane before p62-6K protein processing region. Residues C730 and C751 are joined by a disulfide bond. Over 758-772 (ETTWESLDHLWNNNQ) the chain is Extracellular. The helical transmembrane segment at 773–793 (QMFWIQLLIPLAALIVVTRLL) threads the bilayer. Position 794 (R794) is a topological domain, cytoplasmic. Residues 795–815 (CVCCVVPFLVVAGAAGAGAYE) form a helical membrane-spanning segment. The Extracellular segment spans residues 816 to 1225 (HATTMPSQAG…SKTAWTWLTS (410 aa)). Intrachain disulfides connect C862–C927, C875–C907, C876–C909, and C881–C891. The E1 fusion peptide loop stretch occupies residues 897–914 (VYPFMWGGAYCFCDTENT). N-linked (GlcNAc...) asparagine; by host glycosylation is found at N947 and N1083. Intrachain disulfides connect C1072/C1084, C1114/C1189, C1119/C1193, and C1141/C1183. The chain crosses the membrane as a helical span at residues 1226–1246 (LLGGSAVIIIIGLVLATIVAM). The Cytoplasmic segment spans residues 1247–1255 (YVLTNQKHN).

As to quaternary structure, homodimer. Homomultimer. Interacts with host karyopherin KPNA4; this interaction allows the nuclear import of the viral capsid protein. Interacts with spike glycoprotein E2. Interacts with host IRAK1; the interaction leads to inhibition of IRAK1-dependent signaling. Part of a tetrameric complex composed of host CRM1, host importin alpha/beta dimer and the viral capsid; this complex blocks the receptor-mediated transport through the nuclear pore. Interacts with host phosphatase PPP1CA; this interaction dephosphorylates the capsid protein, which increases its ability to bind to the viral genome. The precursor of protein E3/E2 and E1 form a heterodimer shortly after synthesis. In terms of assembly, interacts with spike glycoprotein E2. The precursor of protein E3/E2 and E1 form a heterodimer shortly after synthesis. Processing of the precursor of protein E3/E2 into E2 and E3 results in a heterodimer of the spike glycoproteins E2 and E1. Spike at virion surface are constituted of three E2-E1 heterodimers. After target cell attachment and endocytosis, E1 change conformation to form homotrimers. Interacts with 6K protein. Interacts with host LDLRAD3; this interaction mediates viral entry to the host cell. As to quaternary structure, interacts with spike glycoprotein E1. Processing of the precursor of protein E3/E2 into E2 and E3 results in a heterodimer of the spike glycoproteins E2 and E1. Spike at virion surface are constituted of a trimer of E2-E1 heterodimers. Interacts with 6K protein. Interacts with host LDLRAD3; this interaction mediates viral entry to the host cell. Oligomer. Interacts with spike glycoprotein E1. Interacts with spike glycoprotein E2. Post-translationally, structural polyprotein: Specific enzymatic cleavages in vivo yield mature proteins. Capsid protein is auto-cleaved during polyprotein translation, unmasking a signal peptide at the N-terminus of the precursor of E3/E2. The remaining polyprotein is then targeted to the host endoplasmic reticulum, where host signal peptidase cleaves it into pE2, 6K and E1 proteins. pE2 is further processed to mature E3 and E2 by host furin in trans-Golgi vesicle. In terms of processing, phosphorylated on serine and threonine residues. Palmitoylated via thioester bonds. These palmitoylations may induce disruption of the C-terminus transmembrane. This would result in the reorientation of E2 C-terminus from lumenal to cytoplasmic side. Post-translationally, N-glycosylated. In terms of processing, palmitoylated via thioester bonds.

The protein localises to the virion. It localises to the host cytoplasm. Its subcellular location is the host cell membrane. It is found in the host nucleus. The protein resides in the virion membrane. The protein localises to the host Golgi apparatus. It localises to the host trans-Golgi network. Its subcellular location is the host endoplasmic reticulum. The enzyme catalyses Autocatalytic release of the core protein from the N-terminus of the togavirus structural polyprotein by hydrolysis of a -Trp-|-Ser- bond.. Functionally, forms an icosahedral capsid with a T=4 symmetry composed of 240 copies of the capsid protein surrounded by a lipid membrane through which penetrate 80 spikes composed of trimers of E1-E2 heterodimers. The capsid protein binds to the viral RNA genome at a site adjacent to a ribosome binding site for viral genome translation following genome release. Possesses a protease activity that results in its autocatalytic cleavage from the nascent structural protein. Following its self-cleavage, the capsid protein transiently associates with ribosomes, and within several minutes the protein binds to viral RNA and rapidly assembles into icosahedric core particles. The resulting nucleocapsid eventually associates with the cytoplasmic domain of the spike glycoprotein E2 at the cell membrane, leading to budding and formation of mature virions. In case of infection, new virions attach to target cells and after clathrin-mediated endocytosis their membrane fuses with the host endosomal membrane. This leads to the release of the nucleocapsid into the cytoplasm, followed by an uncoating event necessary for the genomic RNA to become accessible. The uncoating might be triggered by the interaction of capsid proteins with ribosomes. Binding of ribosomes would release the genomic RNA since the same region is genomic RNA-binding and ribosome-binding. Specifically inhibits interleukin-1 receptor-associated kinase 1/IRAK1-dependent signaling during viral entry, representing a means by which the alphaviruses may evade innate immune detection and activation prior to viral gene expression. Inhibits host transcription. Forms a tetrameric complex with XPO1/CRM1 and the nuclear import receptor importin. This complex blocks the central channel of host nuclear pores thereby inhibiting the receptor-mediated nuclear transport and thus the host mRNA and rRNA transcription. The inhibition of transcription is linked to a cytopathic effect on the host cell. Its function is as follows. Provides the signal sequence for the translocation of the precursor of protein E3/E2 to the host endoplasmic reticulum. Furin-cleaved E3 remains associated with spike glycoprotein E1 and mediates pH protection of the latter during the transport via the secretory pathway. After virion release from the host cell, the assembly protein E3 is gradually released in the extracellular space. Plays a role in viral attachment to target host cell, by binding to the cell receptor LDLRAD3. Synthesized as a p62 precursor which is processed by furin at the cell membrane just before virion budding, giving rise to E2-E1 heterodimer. The p62-E1 heterodimer is stable, whereas E2-E1 is unstable and dissociate at low pH. p62 is processed at the last step, presumably to avoid E1 fusion activation before its final export to cell surface. E2 C-terminus contains a transitory transmembrane that would be disrupted by palmitoylation, resulting in reorientation of the C-terminal tail from lumenal to cytoplasmic side. This step is critical since E2 C-terminus is involved in budding by interacting with capsid proteins. This release of E2 C-terminus in cytoplasm occurs lately in protein export, and precludes premature assembly of particles at the endoplasmic reticulum membrane. In terms of biological role, acts as a viroporin that participates in virus glycoprotein processing and transport to the plasma membrane, cell permeabilization and budding of viral particles. Disrupts the calcium homeostasis of the cell, probably at the endoplasmic reticulum level. This leads to cytoplasmic calcium elevation. Because of its lipophilic properties, the 6K protein is postulated to influence the selection of lipids that interact with the transmembrane domains of the glycoproteins, which, in turn, affects the deformability of the bilayer required for the extreme curvature that occurs as budding proceeds. Present in low amount in virions, about 3% compared to viral glycoproteins. Functionally, class II viral fusion protein. Fusion activity is inactive as long as E1 is bound to E2 in mature virion. After virus attachment to cell receptor LDLRAD3 and endocytosis, acidification of the endosome induce dissociation of E1/E2 heterodimer and concomitant trimerization of the E1 subunits. This E1 trimer is fusion active, and promotes release of viral nucleocapsid in cytoplasm after endosome and viral membrane fusion. Efficient fusion requires the presence of cholesterol and sphingolipid in the target membrane. The sequence is that of Structural polyprotein from Venezuelan equine encephalitis virus (strain 3880) (VEEV).